The chain runs to 132 residues: Small ribosomal subunit protein uS8 (132 aa).

The protein belongs to the universal ribosomal protein uS8 family. In terms of assembly, part of the 30S ribosomal subunit. Contacts proteins S5 and S12.

In terms of biological role, one of the primary rRNA binding proteins, it binds directly to 16S rRNA central domain where it helps coordinate assembly of the platform of the 30S subunit. The polypeptide is Small ribosomal subunit protein uS8 (Lactobacillus acidophilus (strain ATCC 700396 / NCK56 / N2 / NCFM)).